A 439-amino-acid polypeptide reads, in one-letter code: GTPase Obg (439 aa).

The Obg domain maps to 5–164 (TDFFDQATIV…LTLELELKML (160 aa)). The OBG-type G domain maps to 165–335 (ADVGLVGFPN…LLQRVAELLR (171 aa)). GTP is bound by residues 171 to 178 (GFPNAGKS), 196 to 200 (FTTLT), 217 to 220 (DIPG), 287 to 290 (NKAD), and 316 to 318 (SAA). Mg(2+) is bound by residues serine 178 and threonine 198. The interval 337–359 (DPPPQRDPVDPDEPPLEWPLPPV) is disordered. Residues 356–433 (LPPVDENAFT…IGRAELVWDD (78 aa)) enclose the OCT domain.

Belongs to the TRAFAC class OBG-HflX-like GTPase superfamily. OBG GTPase family. In terms of assembly, monomer. Mg(2+) is required as a cofactor.

The protein localises to the cytoplasm. In terms of biological role, an essential GTPase which binds GTP, GDP and possibly (p)ppGpp with moderate affinity, with high nucleotide exchange rates and a fairly low GTP hydrolysis rate. Plays a role in control of the cell cycle, stress response, ribosome biogenesis and in those bacteria that undergo differentiation, in morphogenesis control. This is GTPase Obg from Chloroflexus aggregans (strain MD-66 / DSM 9485).